A 421-amino-acid chain; its full sequence is Imidazolonepropionase (421 aa).

2 residues coordinate Fe(3+): His81 and His83. Zn(2+)-binding residues include His81 and His83. Residues Arg90, Tyr153, and His186 each coordinate 4-imidazolone-5-propanoate. An N-formimidoyl-L-glutamate-binding site is contributed by Tyr153. His251 is a Fe(3+) binding site. Zn(2+) is bound at residue His251. Glu254 lines the 4-imidazolone-5-propanoate pocket. Asp326 lines the Fe(3+) pocket. Asp326 contacts Zn(2+). N-formimidoyl-L-glutamate contacts are provided by Asn328 and Gly330. Ser331 lines the 4-imidazolone-5-propanoate pocket.

The protein belongs to the metallo-dependent hydrolases superfamily. HutI family. It depends on Zn(2+) as a cofactor. The cofactor is Fe(3+).

It localises to the cytoplasm. The catalysed reaction is 4-imidazolone-5-propanoate + H2O = N-formimidoyl-L-glutamate. The protein operates within amino-acid degradation; L-histidine degradation into L-glutamate; N-formimidoyl-L-glutamate from L-histidine: step 3/3. Catalyzes the hydrolytic cleavage of the carbon-nitrogen bond in imidazolone-5-propanoate to yield N-formimidoyl-L-glutamate. It is the third step in the universal histidine degradation pathway. The chain is Imidazolonepropionase from Streptococcus gordonii (strain Challis / ATCC 35105 / BCRC 15272 / CH1 / DL1 / V288).